The following is a 264-amino-acid chain: LIMR family protein SELMODRAFT_416716 (264 aa).

The next 4 helical transmembrane spans lie at 23–43, 96–116, 194–214, and 225–245; these read VVIL…VIGY, ILFT…LIFA, IIWL…FPFL, and WGLL…MSVI.

It belongs to the LIMR family.

It is found in the membrane. The protein is LIMR family protein SELMODRAFT_416716 of Selaginella moellendorffii (Spikemoss).